We begin with the raw amino-acid sequence, 137 residues long: Large ribosomal subunit protein uL16 (137 aa).

This sequence belongs to the universal ribosomal protein uL16 family. As to quaternary structure, part of the 50S ribosomal subunit.

Functionally, binds 23S rRNA and is also seen to make contacts with the A and possibly P site tRNAs. The chain is Large ribosomal subunit protein uL16 from Pseudomonas fluorescens (strain Pf0-1).